Consider the following 1027-residue polypeptide: Pro-apoptotic serine protease nma111 (1027 aa).

The segment at M1–Y46 is disordered. Polar residues predominate over residues S31–N42. The serine protease stretch occupies residues V81–D265. Catalysis depends on charge relay system residues H119, D150, and S232. PDZ domains follow at residues Q288–Q373 and V875–D956. The tract at residues H991–E1027 is disordered.

Belongs to the peptidase S1C family.

Its subcellular location is the nucleus. Its function is as follows. Nuclear serine protease which mediates apoptosis. The sequence is that of Pro-apoptotic serine protease nma111 (nma111) from Aspergillus oryzae (strain ATCC 42149 / RIB 40) (Yellow koji mold).